The sequence spans 195 residues: MGSVSNQEITGGLPKSLDETADIHKSDESLIFQGSGVCKWFNVRMGFGFLTMTKKEGTDLETPVDVFVHQSKLHMEGFRSLKEGESVEFTFKKSSKGLESTRVTGPGGAPCIGSERRPKVKGQQKRRQKGDRCYNCGGLDHHAKECKLPPQPKKCHFCQSPNHMVAQCPAKASQAANLEEQPISEEQELIPETME.

Residues 33–106 (QGSGVCKWFN…GLESTRVTGP (74 aa)) enclose the CSD domain. Positions 98–126 (LESTRVTGPGGAPCIGSERRPKVKGQQKR) are disordered. A flexible linker region spans residues 107–130 (GGAPCIGSERRPKVKGQQKRRQKG). 2 CCHC-type zinc fingers span residues 131-148 (DRCY…ECKL) and 153-170 (KKCH…QCPA). Zn(2+)-binding residues include Cys-133, Cys-136, His-141, Cys-146, Cys-155, Cys-158, His-163, and Cys-168. The interval 175–195 (AANLEEQPISEEQELIPETME) is disordered. Positions 182-195 (PISEEQELIPETME) are enriched in acidic residues.

The protein belongs to the lin-28 family. Monomer.

It localises to the cytoplasm. Its subcellular location is the rough endoplasmic reticulum. The protein localises to the P-body. It is found in the stress granule. The protein resides in the nucleus. It localises to the nucleolus. Functionally, RNA-binding protein that inhibits processing of pre-let-7 miRNAs and regulates translation of mRNAs that control developmental timing, pluripotency and metabolism. Seems to recognize a common structural G-quartet (G4) feature in its miRNA and mRNA targets. 'Translational enhancer' that drives specific mRNAs to polysomes and increases the efficiency of protein synthesis. Its association with the translational machinery and target mRNAs results in an increased number of initiation events per molecule of mRNA and, indirectly, in mRNA stabilization. Suppressor of microRNA (miRNA) biogenesis, including that of let-7. Binds specific target miRNA precursors (pre-miRNAs), recognizing an 5'-GGAG-3' motif found in their terminal loop, and recruits uridylyltransferase. This results in the terminal uridylation of target pre-miRNAs. Uridylated pre-miRNAs fail to be processed by Dicer and undergo degradation. Localized to the periendoplasmic reticulum area, binds to a large number of spliced mRNAs and inhibits the translation of mRNAs destined for the ER, reducing the synthesis of transmembrane proteins, ER or Golgi lumen proteins, and secretory proteins. Binds to and enhances the translation of mRNAs for several metabolic enzymes, increasing glycolysis and oxidative phosphorylation. Which, with the let-7 repression may enhance tissue repair in adult tissue. The protein is Protein lin-28 homolog A (lin28a) of Xenopus tropicalis (Western clawed frog).